The sequence spans 227 residues: Cytochrome c oxidase subunit 2 (227 aa).

Residues 1–26 are Mitochondrial intermembrane-facing; it reads MATWSNFNLQNSASPLMEQIIFFHDH. A helical membrane pass occupies residues 27–51; the sequence is TLVILIMITILVGYLMISLFFNSYI. The Mitochondrial matrix segment spans residues 52-62; sequence NRFLLEGQMIE. The chain crosses the membrane as a helical span at residues 63 to 81; that stretch reads LIWTILPAITLIFIALPSL. The Mitochondrial intermembrane portion of the chain corresponds to 82–227; that stretch reads RLLYLLDELN…NFINWINNYS (146 aa). Cu cation contacts are provided by His161, Cys196, Glu198, Cys200, His204, and Met207. Glu198 is a binding site for Mg(2+).

Belongs to the cytochrome c oxidase subunit 2 family. Component of the cytochrome c oxidase (complex IV, CIV), a multisubunit enzyme composed of a catalytic core of 3 subunits and several supernumerary subunits. The complex exists as a monomer or a dimer and forms supercomplexes (SCs) in the inner mitochondrial membrane with ubiquinol-cytochrome c oxidoreductase (cytochrome b-c1 complex, complex III, CIII). It depends on Cu cation as a cofactor.

It is found in the mitochondrion inner membrane. It carries out the reaction 4 Fe(II)-[cytochrome c] + O2 + 8 H(+)(in) = 4 Fe(III)-[cytochrome c] + 2 H2O + 4 H(+)(out). Its function is as follows. Component of the cytochrome c oxidase, the last enzyme in the mitochondrial electron transport chain which drives oxidative phosphorylation. The respiratory chain contains 3 multisubunit complexes succinate dehydrogenase (complex II, CII), ubiquinol-cytochrome c oxidoreductase (cytochrome b-c1 complex, complex III, CIII) and cytochrome c oxidase (complex IV, CIV), that cooperate to transfer electrons derived from NADH and succinate to molecular oxygen, creating an electrochemical gradient over the inner membrane that drives transmembrane transport and the ATP synthase. Cytochrome c oxidase is the component of the respiratory chain that catalyzes the reduction of oxygen to water. Electrons originating from reduced cytochrome c in the intermembrane space (IMS) are transferred via the dinuclear copper A center (CU(A)) of subunit 2 and heme A of subunit 1 to the active site in subunit 1, a binuclear center (BNC) formed by heme A3 and copper B (CU(B)). The BNC reduces molecular oxygen to 2 water molecules using 4 electrons from cytochrome c in the IMS and 4 protons from the mitochondrial matrix. This Choristoneura rosaceana (Oblique banded leafroller) protein is Cytochrome c oxidase subunit 2 (COII).